The sequence spans 61 residues: Metallothionein-1F (61 aa).

Position 1 is an N-acetylmethionine (methionine 1). The tract at residues 1–29 (MDPNCSCPTGGSCTCAGSCTCKACRCTSC) is beta. Cysteine 5, cysteine 7, cysteine 13, cysteine 15, cysteine 19, cysteine 21, cysteine 24, cysteine 26, cysteine 29, cysteine 33, cysteine 34, cysteine 36, cysteine 37, cysteine 41, cysteine 44, cysteine 48, cysteine 50, and cysteine 57 together coordinate a divalent metal cation. Residues 30 to 61 (KKSCCSCCPAGCAKCAQGCICKGASDKCSCCA) are alpha. At serine 58 the chain carries Phosphoserine. Residues cysteine 59 and cysteine 60 each coordinate a divalent metal cation.

This sequence belongs to the metallothionein superfamily. Type 1 family. As to quaternary structure, monomer.

Metallothioneins have a high content of cysteine residues that bind various heavy metals; these proteins are transcriptionally regulated by both heavy metals and glucocorticoids. The protein is Metallothionein-1F (MT1F) of Sus scrofa (Pig).